Here is a 156-residue protein sequence, read N- to C-terminus: ATP synthase subunit b (156 aa).

The helical transmembrane segment at 5-25 threads the bilayer; that stretch reads LTLIGQAIAFAIFVAFCMKFV.

It belongs to the ATPase B chain family. As to quaternary structure, F-type ATPases have 2 components, F(1) - the catalytic core - and F(0) - the membrane proton channel. F(1) has five subunits: alpha(3), beta(3), gamma(1), delta(1), epsilon(1). F(0) has three main subunits: a(1), b(2) and c(10-14). The alpha and beta chains form an alternating ring which encloses part of the gamma chain. F(1) is attached to F(0) by a central stalk formed by the gamma and epsilon chains, while a peripheral stalk is formed by the delta and b chains.

The protein localises to the cell inner membrane. Its function is as follows. F(1)F(0) ATP synthase produces ATP from ADP in the presence of a proton or sodium gradient. F-type ATPases consist of two structural domains, F(1) containing the extramembraneous catalytic core and F(0) containing the membrane proton channel, linked together by a central stalk and a peripheral stalk. During catalysis, ATP synthesis in the catalytic domain of F(1) is coupled via a rotary mechanism of the central stalk subunits to proton translocation. Functionally, component of the F(0) channel, it forms part of the peripheral stalk, linking F(1) to F(0). The sequence is that of ATP synthase subunit b from Acinetobacter baylyi (strain ATCC 33305 / BD413 / ADP1).